Reading from the N-terminus, the 276-residue chain is Diaminopimelate epimerase (276 aa).

3 residues coordinate substrate: N13, Q46, and N66. C75 serves as the catalytic Proton donor. Residues G76–N77, N159, N192, and E210–R211 contribute to the substrate site. C219 functions as the Proton acceptor in the catalytic mechanism. G220 to T221 contributes to the substrate binding site.

The protein belongs to the diaminopimelate epimerase family. In terms of assembly, homodimer.

The protein localises to the cytoplasm. It carries out the reaction (2S,6S)-2,6-diaminopimelate = meso-2,6-diaminopimelate. It functions in the pathway amino-acid biosynthesis; L-lysine biosynthesis via DAP pathway; DL-2,6-diaminopimelate from LL-2,6-diaminopimelate: step 1/1. Its function is as follows. Catalyzes the stereoinversion of LL-2,6-diaminopimelate (L,L-DAP) to meso-diaminopimelate (meso-DAP), a precursor of L-lysine and an essential component of the bacterial peptidoglycan. In Aeromonas salmonicida (strain A449), this protein is Diaminopimelate epimerase.